The following is a 277-amino-acid chain: Phosphatidylglycerol--prolipoprotein diacylglyceryl transferase (277 aa).

3 consecutive transmembrane segments (helical) span residues 16–36 (FFQI…FYFL), 62–82 (LLFF…VLFY), and 101–121 (GMAF…FAHL). Residue R145 coordinates a 1,2-diacyl-sn-glycero-3-phospho-(1'-sn-glycerol). 2 consecutive transmembrane segments (helical) span residues 214–234 (PIWG…RFIA) and 243–263 (FLGL…PMIV).

The protein belongs to the Lgt family.

The protein resides in the cell inner membrane. The catalysed reaction is L-cysteinyl-[prolipoprotein] + a 1,2-diacyl-sn-glycero-3-phospho-(1'-sn-glycerol) = an S-1,2-diacyl-sn-glyceryl-L-cysteinyl-[prolipoprotein] + sn-glycerol 1-phosphate + H(+). Its pathway is protein modification; lipoprotein biosynthesis (diacylglyceryl transfer). Catalyzes the transfer of the diacylglyceryl group from phosphatidylglycerol to the sulfhydryl group of the N-terminal cysteine of a prolipoprotein, the first step in the formation of mature lipoproteins. This Leptothrix cholodnii (strain ATCC 51168 / LMG 8142 / SP-6) (Leptothrix discophora (strain SP-6)) protein is Phosphatidylglycerol--prolipoprotein diacylglyceryl transferase.